A 284-amino-acid polypeptide reads, in one-letter code: GPN-loop GTPase 3 (284 aa).

G13–T18 serves as a coordination point for GTP. A Gly-Pro-Asn (GPN)-loop; involved in dimer interface motif is present at residues G72 to N74. T174–D177 provides a ligand contact to GTP. Residues K261–E284 are disordered.

The protein belongs to the GPN-loop GTPase family. Heterodimer with GPN1. Binds to RNA polymerase II (RNAPII). Interacts directly with subunits RPB4 and RPB7 and the CTD of RPB1.

In terms of biological role, small GTPase required for proper localization of RNA polymerase II (RNAPII). May act at an RNAP assembly step prior to nuclear import. The protein is GPN-loop GTPase 3 of Rattus norvegicus (Rat).